Consider the following 407-residue polypeptide: Carbamoyl phosphate synthase small chain (407 aa).

The tract at residues 1–203 (MSQNESGTIA…EPCGEYEGKE (203 aa)) is CPSase. Positions 61, 255, and 257 each coordinate L-glutamine. The Glutamine amidotransferase type-1 domain maps to 207–405 (TVAAVDLGIK…CELMKNNSKE (199 aa)). The active-site Nucleophile is the cysteine 283. L-glutamine is bound by residues phenylalanine 284, glutamine 287, asparagine 325, glycine 327, and phenylalanine 328. Residues histidine 378 and glutamate 380 contribute to the active site.

The protein belongs to the CarA family. In terms of assembly, composed of two chains; the small (or glutamine) chain promotes the hydrolysis of glutamine to ammonia, which is used by the large (or ammonia) chain to synthesize carbamoyl phosphate. Tetramer of heterodimers (alpha,beta)4.

It carries out the reaction hydrogencarbonate + L-glutamine + 2 ATP + H2O = carbamoyl phosphate + L-glutamate + 2 ADP + phosphate + 2 H(+). It catalyses the reaction L-glutamine + H2O = L-glutamate + NH4(+). Its pathway is amino-acid biosynthesis; L-arginine biosynthesis; carbamoyl phosphate from bicarbonate: step 1/1. It participates in pyrimidine metabolism; UMP biosynthesis via de novo pathway; (S)-dihydroorotate from bicarbonate: step 1/3. Its function is as follows. Small subunit of the glutamine-dependent carbamoyl phosphate synthetase (CPSase). CPSase catalyzes the formation of carbamoyl phosphate from the ammonia moiety of glutamine, carbonate, and phosphate donated by ATP, constituting the first step of 2 biosynthetic pathways, one leading to arginine and/or urea and the other to pyrimidine nucleotides. The small subunit (glutamine amidotransferase) binds and cleaves glutamine to supply the large subunit with the substrate ammonia. The chain is Carbamoyl phosphate synthase small chain from Bifidobacterium longum (strain NCC 2705).